Consider the following 277-residue polypeptide: Mannosyl-3-phosphoglycerate phosphatase (277 aa).

The Nucleophile role is filled by Asp13. The Mg(2+) site is built by Asp13, Asp15, and Asp219.

Belongs to the HAD-like hydrolase superfamily. MPGP family. Mg(2+) serves as cofactor.

The protein resides in the cytoplasm. It carries out the reaction 2-O-(alpha-D-mannosyl)-3-phosphoglycerate + H2O = (2R)-2-O-(alpha-D-mannosyl)-glycerate + phosphate. Its pathway is carbohydrate biosynthesis; 2-(alpha-D-mannosyl)-D-glycerate biosynthesis; 2-(alpha-D-mannosyl)-D-glycerate from GDP-alpha-D-mannose (MPG route): step 2/2. Its function is as follows. Hydrolyzes mannosyl-3-phosphoglycerate (MPG) to form the osmolyte mannosylglycerate (MG). This Aeropyrum pernix (strain ATCC 700893 / DSM 11879 / JCM 9820 / NBRC 100138 / K1) protein is Mannosyl-3-phosphoglycerate phosphatase.